Here is a 303-residue protein sequence, read N- to C-terminus: N-acetyl-D-glucosamine kinase (303 aa).

ATP-binding positions include 4–11 and 133–140; these read GFDVGGTK and GFGGGLIY. Zn(2+)-binding residues include histidine 157, cysteine 177, cysteine 179, and cysteine 184.

Belongs to the ROK (NagC/XylR) family. NagK subfamily.

The enzyme catalyses N-acetyl-D-glucosamine + ATP = N-acetyl-D-glucosamine 6-phosphate + ADP + H(+). Its pathway is cell wall biogenesis; peptidoglycan recycling. Its function is as follows. Catalyzes the phosphorylation of N-acetyl-D-glucosamine (GlcNAc) derived from cell-wall degradation, yielding GlcNAc-6-P. The polypeptide is N-acetyl-D-glucosamine kinase (Vibrio vulnificus (strain CMCP6)).